Consider the following 224-residue polypeptide: Uracil-DNA glycosylase (224 aa).

The active-site Proton acceptor is Asp-62.

It belongs to the uracil-DNA glycosylase (UDG) superfamily. UNG family.

It localises to the cytoplasm. It carries out the reaction Hydrolyzes single-stranded DNA or mismatched double-stranded DNA and polynucleotides, releasing free uracil.. In terms of biological role, excises uracil residues from the DNA which can arise as a result of misincorporation of dUMP residues by DNA polymerase or due to deamination of cytosine. The polypeptide is Uracil-DNA glycosylase (Aliivibrio fischeri (strain ATCC 700601 / ES114) (Vibrio fischeri)).